Reading from the N-terminus, the 519-residue chain is Protein nucleotidyltransferase YdiU (519 aa).

The ATP site is built by Gly-101, Gly-103, Arg-104, Lys-124, Asp-136, Gly-137, Arg-194, and Arg-201. The active-site Proton acceptor is the Asp-271. 2 residues coordinate Mg(2+): Asn-272 and Asp-281. Asp-281 contributes to the ATP binding site.

It belongs to the SELO family. The cofactor is Mg(2+). Requires Mn(2+) as cofactor.

It catalyses the reaction L-seryl-[protein] + ATP = 3-O-(5'-adenylyl)-L-seryl-[protein] + diphosphate. It carries out the reaction L-threonyl-[protein] + ATP = 3-O-(5'-adenylyl)-L-threonyl-[protein] + diphosphate. The enzyme catalyses L-tyrosyl-[protein] + ATP = O-(5'-adenylyl)-L-tyrosyl-[protein] + diphosphate. The catalysed reaction is L-histidyl-[protein] + UTP = N(tele)-(5'-uridylyl)-L-histidyl-[protein] + diphosphate. It catalyses the reaction L-seryl-[protein] + UTP = O-(5'-uridylyl)-L-seryl-[protein] + diphosphate. It carries out the reaction L-tyrosyl-[protein] + UTP = O-(5'-uridylyl)-L-tyrosyl-[protein] + diphosphate. Nucleotidyltransferase involved in the post-translational modification of proteins. It can catalyze the addition of adenosine monophosphate (AMP) or uridine monophosphate (UMP) to a protein, resulting in modifications known as AMPylation and UMPylation. The sequence is that of Protein nucleotidyltransferase YdiU from Azoarcus sp. (strain BH72).